Here is a 428-residue protein sequence, read N- to C-terminus: Glutamate-1-semialdehyde 2,1-aminomutase (428 aa).

Lys267 is modified (N6-(pyridoxal phosphate)lysine).

It belongs to the class-III pyridoxal-phosphate-dependent aminotransferase family. HemL subfamily. In terms of assembly, homodimer. Pyridoxal 5'-phosphate is required as a cofactor.

The protein localises to the cytoplasm. It carries out the reaction (S)-4-amino-5-oxopentanoate = 5-aminolevulinate. Its pathway is porphyrin-containing compound metabolism; protoporphyrin-IX biosynthesis; 5-aminolevulinate from L-glutamyl-tRNA(Glu): step 2/2. This Flavobacterium psychrophilum (strain ATCC 49511 / DSM 21280 / CIP 103535 / JIP02/86) protein is Glutamate-1-semialdehyde 2,1-aminomutase.